A 556-amino-acid chain; its full sequence is (-)-alpha-pinene synthase (556 aa).

The Mg(2+) site is built by Asp309, Asp313, Asp453, and Glu461. A DDXXD motif motif is present at residues 309–313 (DDMYD).

The protein belongs to the terpene synthase family. Tpsa subfamily. Mg(2+) is required as a cofactor. The cofactor is Mn(2+). As to expression, expressed in ripe fruits and roots. Not detected in vegetative tissues.

It localises to the cytoplasm. Its subcellular location is the cytosol. It carries out the reaction (2E)-geranyl diphosphate = (1S,5S)-alpha-pinene + diphosphate. It functions in the pathway secondary metabolite biosynthesis; terpenoid biosynthesis. Functionally, monoterpene synthase catalyzing the production of (-)-alpha-pinene, beta-phellandrene and beta-myrcene as the major products. Unable to use farnesyl diphosphate as substrate. Exclusively expressed in the fruit of wild strawberries. Not detected in cultivated varieties. The polypeptide is (-)-alpha-pinene synthase (Fragaria vesca (Woodland strawberry)).